The chain runs to 116 residues: Large ribosomal subunit protein bL20 (116 aa).

The protein belongs to the bacterial ribosomal protein bL20 family.

Functionally, binds directly to 23S ribosomal RNA and is necessary for the in vitro assembly process of the 50S ribosomal subunit. It is not involved in the protein synthesizing functions of that subunit. The polypeptide is Large ribosomal subunit protein bL20 (Helicobacter pylori (strain P12)).